A 243-amino-acid polypeptide reads, in one-letter code: 1-(5-phosphoribosyl)-5-[(5-phosphoribosylamino)methylideneamino] imidazole-4-carboxamide isomerase (243 aa).

Aspartate 8 serves as the catalytic Proton acceptor. The Proton donor role is filled by aspartate 128.

The protein belongs to the HisA/HisF family.

It is found in the cytoplasm. The enzyme catalyses 1-(5-phospho-beta-D-ribosyl)-5-[(5-phospho-beta-D-ribosylamino)methylideneamino]imidazole-4-carboxamide = 5-[(5-phospho-1-deoxy-D-ribulos-1-ylimino)methylamino]-1-(5-phospho-beta-D-ribosyl)imidazole-4-carboxamide. It participates in amino-acid biosynthesis; L-histidine biosynthesis; L-histidine from 5-phospho-alpha-D-ribose 1-diphosphate: step 4/9. This chain is 1-(5-phosphoribosyl)-5-[(5-phosphoribosylamino)methylideneamino] imidazole-4-carboxamide isomerase, found in Opitutus terrae (strain DSM 11246 / JCM 15787 / PB90-1).